The sequence spans 178 residues: Ribosome maturation factor RimP (178 aa).

It belongs to the RimP family.

It localises to the cytoplasm. In terms of biological role, required for maturation of 30S ribosomal subunits. The sequence is that of Ribosome maturation factor RimP from Mycolicibacterium gilvum (strain PYR-GCK) (Mycobacterium gilvum (strain PYR-GCK)).